Here is a 441-residue protein sequence, read N- to C-terminus: C4-dicarboxylate transport protein (441 aa).

The Cytoplasmic portion of the chain corresponds to 1–30 (MIIEHSAEVRGKTPLYRHLYVQVLAAIAAG). A helical membrane pass occupies residues 31–49 (ILLGHFYPDIGTELKPLGD). The Periplasmic segment spans residues 50–68 (AFIRLVKMIIAPVIFLTVA). The chain crosses the membrane as a helical span at residues 69–87 (TGIAGMTDLAKVGRVAGKA). Residues 88 to 99 (MIYFLAFSTLAL) are Cytoplasmic-facing. A helical membrane pass occupies residues 100-118 (VVGLVVANVVQPGAGMHID). The Periplasmic portion of the chain corresponds to 119-149 (PASLDAKAVATYAEKAHEQSITGFLMNIIPT). A helical transmembrane segment spans residues 150-168 (TLVGAFAEGDILQVLFISV). Topologically, residues 169–171 (LFG) are cytoplasmic. A helical membrane pass occupies residues 172–190 (ISLAIVGKKAEPVVDFLQA). Topologically, residues 191 to 209 (LTLPIFRLVAILMKAAPIG) are periplasmic. The chain crosses the membrane as a helical span at residues 210 to 228 (AFGAMAFTIGKYGIASIAN). The Cytoplasmic portion of the chain corresponds to 229–241 (LAMLIGTFYLTSF). The chain crosses the membrane as a helical span at residues 242-260 (LFVFIVLGAVARYNGFSIL). Residues 261-281 (SLIRYIKEELLLVLGTSSSEA) lie on the Periplasmic side of the membrane. Residues 282-300 (ALPGLMNKMEKAGCKRSVV) form a helical membrane-spanning segment. At 301–320 (GLVIPTGYSFNLDGTNIYMT) the chain is on the cytoplasmic side. A helical membrane pass occupies residues 321–339 (LAALFIAQATDTPLSYGDQ). At 340–350 (ILLLLVAMLSS) the chain is on the periplasmic side. The chain crosses the membrane as a helical span at residues 351-369 (KGAAGITGAGFITLAATLS). The Cytoplasmic portion of the chain corresponds to 370 to 378 (VVPSVPVAG). A helical transmembrane segment spans residues 379–398 (MALILGIDRFMSECRALTNF). Topologically, residues 399–405 (VGNAVAT) are periplasmic. Residues 406–424 (IVVAKWEGELDQAQLSAAL) traverse the membrane as a helical segment. The Cytoplasmic segment spans residues 425 to 441 (GGEASVEAIPAVVQPAE).

It belongs to the dicarboxylate/amino acid:cation symporter (DAACS) (TC 2.A.23) family.

It is found in the cell inner membrane. Responsible for the transport of dicarboxylates such as succinate, fumarate, and malate from the periplasm across the inner membrane. This transport system plays an important role in the energy supply of rhizobium-legume symbionts. This chain is C4-dicarboxylate transport protein (dctA), found in Rhizobium meliloti (strain 1021) (Ensifer meliloti).